The primary structure comprises 272 residues: 2-dehydro-3-deoxyphosphooctonate aldolase (272 aa).

The protein belongs to the KdsA family.

It localises to the cytoplasm. The catalysed reaction is D-arabinose 5-phosphate + phosphoenolpyruvate + H2O = 3-deoxy-alpha-D-manno-2-octulosonate-8-phosphate + phosphate. It participates in carbohydrate biosynthesis; 3-deoxy-D-manno-octulosonate biosynthesis; 3-deoxy-D-manno-octulosonate from D-ribulose 5-phosphate: step 2/3. It functions in the pathway bacterial outer membrane biogenesis; lipopolysaccharide biosynthesis. The sequence is that of 2-dehydro-3-deoxyphosphooctonate aldolase from Trichlorobacter lovleyi (strain ATCC BAA-1151 / DSM 17278 / SZ) (Geobacter lovleyi).